The following is a 1024-amino-acid chain: MMLHEAVMLEIYRQALSASELTSPRCQSRDSNTSAGAGAGMADVRCPSNESHCSANDRLTPAATPTLTPTEATISPNSVGLPLTATLPPAAAVALLPPQSAAMAAYLAAAQQNHLLLTNPLAAAASLVQHATQQAVVEGEVESPALDFSRKRPKSHGDDDQEEDQEQDQEQEQEQEPDHDVQCDNGPLDLSVSTGKRQESVSPPARKIPRSISADYKSPLPPGSWMPPINPYLAAVAAKTGGLGYSKLAPSEASKALEKMTEMSRLETSPTAARSLGATSSVGAGVPAGASSNSGGRHSAWQSHWLNKGADTAKDVFKCVWCKQSFSTLANLTAHMKETQHCGVQIPSPLPTGGVGTPSAPPPTRLATSASNSACSSSSSSTSSSSNSSKSELNMLIKETMPLPRKLVRGQDVWLGKGAEQTRQILKCMWCGQSFRSLAEMTSHMQETQHYTNIISQEQIISWKSGDERERPTNTGVPSTSTAAPSSPSCTAPSVSAVLTCKVCDQAFGSLKELSTHMAQKSHYKESPAPSASPPAAGTGNPKRGRQNRNEKRKKSLPVRKLLELERSGSNSSLDSALKPLRDFAAATKITCEKCGSKIETALFVEHIRKCLGESIPIPPRRSNAGVDRLPSPSLGLGAEKPPSVLNALEQLIEKSFESRTSRTMTHGGYSEAGTPLGASILKRLGIEDSSDYTKPLMDAQAMHLLRSSFASRDRSASESSSASRVESSYTPDRQQATPHKSPDTPAPPPPPPPTIKAEPLEAEPLVGCDREGCSPRQQIQVKKEFSMEACRESPRSVSKSPAPQTERSPPDNGSLLALNSMFDQLSGVENSGNNNSGHCFNNNNSCSSVSAQKPKAHPLAALQKLCETTDPPSTGLRSASSAGSSTASATLPSANGNDLVAFSWACNEAVLSASNGGSAGDSSIIKCSYCDTPFASKGAYRHHLSKVHFVKDAGEDSPRLKSPAVQSPRSMPLASPRRSASRSPATGSQQPPPSPTISPYDESPQSKFLKYTELAKQLSSKNA.

Positions 20–35 (ELTSPRCQSRDSNTSA) are enriched in polar residues. Disordered regions lie at residues 20–40 (ELTSPRCQSRDSNTSAGAGAG) and 138–215 (EGEV…ISAD). Residues 159–175 (DDQEEDQEQDQEQEQEQ) are compositionally biased toward acidic residues. Residues 317-341 (FKCVWCKQSFSTLANLTAHMKETQH) form a C2H2-type 1 zinc finger. Positions 350–392 (LPTGGVGTPSAPPPTRLATSASNSACSSSSSSTSSSSNSSKSE) are disordered. Residues 368–391 (TSASNSACSSSSSSTSSSSNSSKS) are compositionally biased toward low complexity. A C2H2-type 2 zinc finger spans residues 426–450 (LKCMWCGQSFRSLAEMTSHMQETQH). 5 disordered regions span residues 466 to 489 (GDERERPTNTGVPSTSTAAPSSPS), 519 to 576 (AQKS…SLDS), 712 to 759 (SRDR…IKAE), 786 to 818 (FSMEACRESPRSVSKSPAPQTERSPPDNGSLLA), and 868 to 891 (ETTDPPSTGLRSASSAGSSTASAT). The span at 477 to 489 (VPSTSTAAPSSPS) shows a compositional bias: low complexity. A C2H2-type 3 zinc finger spans residues 499–523 (LTCKVCDQAFGSLKELSTHMAQKSH). Residues 527-537 (SPAPSASPPAA) are compositionally biased toward low complexity. Basic residues predominate over residues 543-558 (KRGRQNRNEKRKKSLP). Over residues 718-729 (SESSSASRVESS) the composition is skewed to low complexity. Positions 745–755 (TPAPPPPPPPT) are enriched in pro residues. The span at 786–795 (FSMEACRESP) shows a compositional bias: basic and acidic residues. Over residues 796 to 808 (RSVSKSPAPQTER) the composition is skewed to polar residues. Low complexity predominate over residues 874–891 (STGLRSASSAGSSTASAT). Residues 926–949 (IKCSYCDTPFASKGAYRHHLSKVH) form a C2H2-type 4 zinc finger. The segment at 954–1004 (AGEDSPRLKSPAVQSPRSMPLASPRRSASRSPATGSQQPPPSPTISPYDES) is disordered. Positions 968–990 (SPRSMPLASPRRSASRSPATGSQ) are enriched in low complexity.

This sequence belongs to the teashirt C2H2-type zinc-finger protein family. As to expression, expression in the Malpighian tubules (MTs) and stomatogastric nervous system starts at embryonic stage 10. At stage 11, expression in the head domain is initiated in the clypeolabrum in two bilaterally symmetric clusters of cells. At stage 12, expression appears in the central nervous system (CNS) of the trunk and the epidermis. The staining in the hindgut is maintained throughout embryogenesis. At stage 13, expression is present in elongating MTs. The anterior staining is detected in cells that invaginate into the stomodeum and by stage 15 onwards, in cells close to the pharynx. Also expressed in cells of the brain, the second constriction of the gut, the trunk epidermis, the anterior segments of the CNS (the three thoracic and the first two abdominal segments) and in the MTs. From stage 12 onwards, tsh and tio are colocalized in some cells.

Its subcellular location is the nucleus. Tiptop (tio) and teashirt (tsh) have, on the whole, common activities. Tio and tsh repress each other's expression and tsh has a crucial role for trunk patterning that is in part masked by ectopic expression of tiptop. Both genes share a common activity required for the activation of Ser and svb and the maintenance of en and wg. In Drosophila melanogaster (Fruit fly), this protein is Protein tiptop (tio).